The primary structure comprises 306 residues: Non-homologous end joining protein Ku 2 (306 aa).

The Ku domain occupies 21–206; it reads ISFGLVNIGV…EVSKQEIDMA (186 aa). A disordered region spans residues 233 to 306; it reads LIDAKTKGTK…GSRDKTRKRA (74 aa). Positions 274-290 are enriched in basic residues; it reads RTSRRKTTASASRRRSS. Over residues 291 to 300 the composition is skewed to basic and acidic residues; that stretch reads SNREKTGSRD.

Belongs to the prokaryotic Ku family. As to quaternary structure, homodimer. Interacts with LigD.

Functionally, with LigD forms a non-homologous end joining (NHEJ) DNA repair enzyme, which repairs dsDNA breaks with reduced fidelity. Binds linear dsDNA with 5'- and 3'- overhangs but not closed circular dsDNA nor ssDNA. Recruits and stimulates the ligase activity of LigD. This is Non-homologous end joining protein Ku 2 from Saccharopolyspora erythraea (strain ATCC 11635 / DSM 40517 / JCM 4748 / NBRC 13426 / NCIMB 8594 / NRRL 2338).